Here is an 89-residue protein sequence, read N- to C-terminus: Small ribosomal subunit protein uS15 (89 aa).

It belongs to the universal ribosomal protein uS15 family. Part of the 30S ribosomal subunit. Forms a bridge to the 50S subunit in the 70S ribosome, contacting the 23S rRNA.

Its function is as follows. One of the primary rRNA binding proteins, it binds directly to 16S rRNA where it helps nucleate assembly of the platform of the 30S subunit by binding and bridging several RNA helices of the 16S rRNA. Forms an intersubunit bridge (bridge B4) with the 23S rRNA of the 50S subunit in the ribosome. This chain is Small ribosomal subunit protein uS15, found in Acholeplasma laidlawii (strain PG-8A).